Reading from the N-terminus, the 125-residue chain is UPF0593 mitochondrial protein C806.05 (125 aa).

Belongs to the UPF0593 family.

It localises to the mitochondrion. The chain is UPF0593 mitochondrial protein C806.05 from Schizosaccharomyces pombe (strain 972 / ATCC 24843) (Fission yeast).